Here is a 171-residue protein sequence, read N- to C-terminus: Small ribosomal subunit protein uS5 (171 aa).

One can recognise an S5 DRBM domain in the interval 16–79; it reads LREKMISVNR…EEARRKLVKI (64 aa).

The protein belongs to the universal ribosomal protein uS5 family. In terms of assembly, part of the 30S ribosomal subunit. Contacts proteins S4 and S8.

In terms of biological role, with S4 and S12 plays an important role in translational accuracy. Located at the back of the 30S subunit body where it stabilizes the conformation of the head with respect to the body. This is Small ribosomal subunit protein uS5 from Thiobacillus denitrificans (strain ATCC 25259 / T1).